The sequence spans 152 residues: MYPAHLLGLLAVCVSLLGAASIPPLPLNLYQFKNMIQCANHGSRMTLDYMDYGCYCGTGGSGTPVDELDRCCKIHDDCYGEAEKLPACNYMLSGPYYNLYTYDCVEHQLTCKDNNDECKAFICNCDRTAAICFAGAPYNKENYNIDLNKHCQ.

Positions 1 to 21 are cleaved as a signal peptide; that stretch reads MYPAHLLGLLAVCVSLLGAAS. Residues 22–27 constitute a propeptide that is removed on maturation; that stretch reads IPPLPL. 7 disulfide bridges follow: cysteine 38/cysteine 104, cysteine 54/cysteine 151, cysteine 56/cysteine 72, cysteine 71/cysteine 132, cysteine 78/cysteine 125, cysteine 88/cysteine 118, and cysteine 111/cysteine 123. Residues tyrosine 55, glycine 57, and glycine 59 each coordinate Ca(2+). Histidine 75 is a catalytic residue. Ca(2+) is bound at residue aspartate 76. Aspartate 126 is an active-site residue.

It belongs to the phospholipase A2 family. Group I subfamily. D49 sub-subfamily. Ca(2+) is required as a cofactor. In terms of tissue distribution, expressed by the venom gland.

Its subcellular location is the secreted. It catalyses the reaction a 1,2-diacyl-sn-glycero-3-phosphocholine + H2O = a 1-acyl-sn-glycero-3-phosphocholine + a fatty acid + H(+). PLA2 catalyzes the calcium-dependent hydrolysis of the 2-acyl groups in 3-sn-phosphoglycerides. In Hydrophis hardwickii (Hardwick's spine-bellied seasnake), this protein is Acidic phospholipase A2 57.